A 171-amino-acid polypeptide reads, in one-letter code: Interleukin-26 (171 aa).

An N-terminal signal peptide occupies residues 1–21 (MLVNFILRCGLLLVTLSLAIA).

Belongs to the IL-10 family. As to quaternary structure, homodimer. As to expression, expressed in HVS transformed T-cells but not other T-cell lines or primary stimulated T-cells. Expressed in colonic T-cells including Th17 inflammatory T-cells; the expression is significantly increased in serum of patients with Crohn's disease (at protein level).

It is found in the secreted. May play a role in local mechanisms of mucosal immunity and seems to have a pro-inflammatory function. May play a role in inflammatory bowel disease. Activates STAT1 and STAT3, MAPK1/3 (ERK1/2), JUN and AKT. Induces expression of SOCS3, TNF-alpha and IL-8, secretion of IL-8 and IL-10 and surface expression of ICAM1. Decreases proliferation of intestinal epithelial cells. Is inhibited by heparin. This Homo sapiens (Human) protein is Interleukin-26 (IL26).